The following is a 200-amino-acid chain: GTP cyclohydrolase 1 (200 aa).

Zn(2+) is bound by residues Cys-87, His-90, and Cys-158.

The protein belongs to the GTP cyclohydrolase I family. In terms of assembly, toroid-shaped homodecamer, composed of two pentamers of five dimers.

The catalysed reaction is GTP + H2O = 7,8-dihydroneopterin 3'-triphosphate + formate + H(+). It participates in cofactor biosynthesis; 7,8-dihydroneopterin triphosphate biosynthesis; 7,8-dihydroneopterin triphosphate from GTP: step 1/1. This chain is GTP cyclohydrolase 1, found in Xanthomonas euvesicatoria pv. vesicatoria (strain 85-10) (Xanthomonas campestris pv. vesicatoria).